The chain runs to 95 residues: UPF0358 protein GTNG_0942 (95 aa).

It belongs to the UPF0358 family.

In Geobacillus thermodenitrificans (strain NG80-2), this protein is UPF0358 protein GTNG_0942.